The chain runs to 511 residues: Steroid 17-alpha-hydroxylase/17,20 lyase (511 aa).

Cysteine 442 contacts heme.

Belongs to the cytochrome P450 family. Requires heme as cofactor.

The protein resides in the endoplasmic reticulum membrane. Its subcellular location is the microsome membrane. The enzyme catalyses a C21-steroid + reduced [NADPH--hemoprotein reductase] + O2 = a 17alpha-hydroxy-C21-steroid + oxidized [NADPH--hemoprotein reductase] + H2O + H(+). It carries out the reaction progesterone + reduced [NADPH--hemoprotein reductase] + O2 = 17alpha-hydroxyprogesterone + oxidized [NADPH--hemoprotein reductase] + H2O + H(+). The catalysed reaction is pregnenolone + reduced [NADPH--hemoprotein reductase] + O2 = 17alpha-hydroxypregnenolone + oxidized [NADPH--hemoprotein reductase] + H2O + H(+). It catalyses the reaction 17alpha-hydroxyprogesterone + reduced [NADPH--hemoprotein reductase] + O2 = androst-4-ene-3,17-dione + acetate + oxidized [NADPH--hemoprotein reductase] + H2O + 2 H(+). The enzyme catalyses 17alpha-hydroxyprogesterone + reduced [NADPH--hemoprotein reductase] + O2 = 16alpha,17alpha-dihydroxyprogesterone + oxidized [NADPH--hemoprotein reductase] + H2O + H(+). It carries out the reaction 16alpha,17alpha-dihydroxyprogesterone + reduced [NADPH--hemoprotein reductase] + O2 = 6beta,16alpha,17alpha-trihydroxyprogesterone + oxidized [NADPH--hemoprotein reductase] + H2O + H(+). The catalysed reaction is 17alpha-hydroxypregnenolone + reduced [NADPH--hemoprotein reductase] + O2 = 3beta-hydroxyandrost-5-en-17-one + acetate + oxidized [NADPH--hemoprotein reductase] + H2O + 2 H(+). It catalyses the reaction 16alpha,17alpha-dihydroxypregnenolone + reduced [NADPH--hemoprotein reductase] + O2 = 3beta,16alpha-dihydroxy-androst-5-en-17-one + acetate + oxidized [NADPH--hemoprotein reductase] + H2O + 2 H(+). The enzyme catalyses 3beta-hydroxyandrost-5-en-17-one + reduced [NADPH--hemoprotein reductase] + O2 = 3beta,16alpha-dihydroxy-androst-5-en-17-one + oxidized [NADPH--hemoprotein reductase] + H2O + H(+). It carries out the reaction androst-4-ene-3,17-dione + reduced [NADPH--hemoprotein reductase] + O2 = 16alpha-hydroxyandrost-4-ene-3,17-dione + oxidized [NADPH--hemoprotein reductase] + H2O + H(+). It functions in the pathway steroid hormone biosynthesis. It participates in steroid biosynthesis; glucocorticoid biosynthesis. Its activity is regulated as follows. Regulated predominantly by intracellular cAMP levels. The 17,20-lyase activity is stimulated by cytochrome b5, which acts as an allosteric effector increasing the Vmax of the lyase activity. Functionally, a cytochrome P450 monooxygenase involved in corticoid and androgen biosynthesis. Catalyzes 17-alpha hydroxylation of C21 steroids, which is common for both pathways. A second oxidative step, required only for androgen synthesis, involves an acyl-carbon cleavage. The 17-alpha hydroxy intermediates, as part of adrenal glucocorticoids biosynthesis pathway, are precursors of cortisol. Hydroxylates steroid hormones, pregnenolone and progesterone to form 17-alpha hydroxy metabolites, followed by the cleavage of the C17-C20 bond to form C19 steroids, dehydroepiandrosterone (DHEA) and androstenedione. Has 16-alpha hydroxylase activity. Catalyzes 16-alpha hydroxylation of 17-alpha hydroxy pregnenolone, followed by the cleavage of the C17-C20 bond to form 16-alpha-hydroxy DHEA. Also 16-alpha hydroxylates androgens, relevant for estriol synthesis. Mechanistically, uses molecular oxygen inserting one oxygen atom into a substrate, and reducing the second into a water molecule, with two electrons provided by NADPH via cytochrome P450 reductase (CPR; NADPH-ferrihemoprotein reductase). The sequence is that of Steroid 17-alpha-hydroxylase/17,20 lyase (CYP17A1) from Mesocricetus auratus (Golden hamster).